A 157-amino-acid chain; its full sequence is 17.8 kDa class I heat shock protein (157 aa).

Residues 43–157 enclose the sHSP domain; that stretch reads ETAAFVNTHI…PEVKAIDISG (115 aa).

Belongs to the small heat shock protein (HSP20) family. As to quaternary structure, forms oligomeric structures.

The protein localises to the cytoplasm. The chain is 17.8 kDa class I heat shock protein from Daucus carota (Wild carrot).